Here is a 159-residue protein sequence, read N- to C-terminus: Nudix hydrolase DR_1025 (159 aa).

Residues M1, R14, and S49 each coordinate Mg(2+). 1–6 lines the ATP pocket; that stretch reads MEHDER. Residues 11 to 144 enclose the Nudix hydrolase domain; that stretch reads VELRAAGVVL…QIRMYQTKLF (134 aa). 50–51 is an ATP binding site; it reads GA. Positions 50 to 71 match the Nudix box motif; the sequence is GAVEDGENPQDAAVREACEETG. 2 residues coordinate Mg(2+): E53 and E65. 87–89 lines the ATP pocket; it reads FPD. Residue R95 participates in Mg(2+) binding.

It belongs to the Nudix hydrolase family. Homodimer. Requires Mg(2+) as cofactor.

It catalyses the reaction 8-oxo-dGTP + H2O = 8-oxo-dGDP + phosphate + H(+). The catalysed reaction is 8-oxo-GTP + H2O = 8-oxo-GDP + phosphate + H(+). The enzyme catalyses P(1),P(4)-bis(5'-adenosyl) tetraphosphate + H2O = AMP + ATP + 2 H(+). Its function is as follows. Hydrolase that can act as a nucleoside triphosphatase and a dinucleoside polyphosphate pyrophosphatase. The best substrates are 8-oxo-dGTP and 8-oxo-GTP. Other substrates include Ap4A, dGTP and GTP. May be involved in protection from damage caused by radiation. The protein is Nudix hydrolase DR_1025 of Deinococcus radiodurans (strain ATCC 13939 / DSM 20539 / JCM 16871 / CCUG 27074 / LMG 4051 / NBRC 15346 / NCIMB 9279 / VKM B-1422 / R1).